The chain runs to 77 residues: Defensin-B6 (77 aa).

An N-terminal signal peptide occupies residues 1–20 (MKTLFFLSVFIFLLLHLSPG). 3 disulfide bridges follow: Cys43–Cys70, Cys50–Cys64, and Cys54–Cys71.

It belongs to the beta-defensin family. In terms of tissue distribution, lowly expressed in spleen, kidney and lung.

It is found in the secreted. Functionally, has antimicrobial activity. This is Defensin-B6 from Ornithorhynchus anatinus (Duckbill platypus).